A 295-amino-acid polypeptide reads, in one-letter code: Nucleotide-binding protein RBAM_031990 (295 aa).

An ATP-binding site is contributed by 16–23; it reads GMSGAGKT. GTP is bound at residue 67–70; the sequence is DLRG.

The protein belongs to the RapZ-like family.

Functionally, displays ATPase and GTPase activities. This chain is Nucleotide-binding protein RBAM_031990, found in Bacillus velezensis (strain DSM 23117 / BGSC 10A6 / LMG 26770 / FZB42) (Bacillus amyloliquefaciens subsp. plantarum).